A 196-amino-acid chain; its full sequence is Fucoxanthin-chlorophyll a-c binding protein A, chloroplastic (196 aa).

Residues 1 to 31 constitute a chloroplast transit peptide; that stretch reads MKFAVFASLLASRAAFAPAQQSARTSVATNM. 3 consecutive transmembrane segments (helical) span residues 73–94, 114–134, and 174–196; these read ICML…PGDI, VPGA…IAVM, and GRAA…SILP.

The protein belongs to the fucoxanthin chlorophyll protein family. As to quaternary structure, the LHC complex of chromophytic algae is composed of fucoxanthin, chlorophyll A and C bound non-covalently by fucoxanthin chlorophyll proteins (FCPs). The ratio of the pigments in LHC; fucoxanthin: chlorophyll C: chlorophyll A; (0.6-1): (0.1-0.3): (1).

Its subcellular location is the plastid. It localises to the chloroplast thylakoid membrane. The light-harvesting complex (LHC) functions as a light receptor, it captures and delivers excitation energy to photosystems with which it is closely associated. Energy is transferred from the carotenoid and chlorophyll C (or B) to chlorophyll A and the photosynthetic reaction centers where it is used to synthesize ATP and reducing power. The polypeptide is Fucoxanthin-chlorophyll a-c binding protein A, chloroplastic (FCPA) (Phaeodactylum tricornutum (Diatom)).